The chain runs to 423 residues: Keratin, type I cytoskeletal 18 (423 aa).

S2 carries the N-acetylserine modification. The head stretch occupies residues 2–71 (SFTTRSTTFS…GLAGMGGVQT (70 aa)). S7, S11, S16, and S19 each carry phosphoserine. Phosphoserine; alternate is present on residues S31 and S32. S31 and S32 each carry an O-linked (GlcNAc) serine; alternate glycan. Position 35 is a phosphoserine (S35). At Y37 the chain carries Phosphotyrosine. A Phosphoserine modification is found at S43. Residue R46 is modified to Omega-N-methylarginine. Residue S50 is modified to Phosphoserine; alternate. S50 carries O-linked (GlcNAc) serine; alternate glycosylation. S52 carries the post-translational modification Phosphoserine; by MAPKAPK2 and MAPKAPK3. Phosphoserine is present on residues S57 and S60. The necessary for interaction with PNN stretch occupies residues 62–366 (GLAGMGGVQT…EALLNIKVKL (305 aa)). Residues 69–121 (VQTEKETMQDLNDRLASYLDKVKNLETENRRLESKIREYLEKRGPQGVRDWGH) are interaction with TRADD. A coil 1A region spans residues 72–107 (EKETMQDLNDRLASYLDKVKNLETENRRLESKIREY). Residues 72 to 384 (EKETMQDLND…RLLEDGDDFS (313 aa)) enclose the IF rod domain. K73 is covalently cross-linked (Glycyl lysine isopeptide (Lys-Gly) (interchain with G-Cter in SUMO2)). S85 is modified (phosphoserine). Residues 108 to 125 (LEKRGPQGVRDWGHYFKT) form a linker 1 region. N6-acetyllysine is present on K124. A coil 1B region spans residues 126–217 (IEDLRAQIFA…KNHEEEVQGL (92 aa)). Phosphoserine occurs at positions 137 and 170. The linker 12 stretch occupies residues 218–241 (EAQIASSGLTVEVDAPKSQDLSKI). The segment at 236-384 (QDLSKIMADI…RLLEDGDDFS (149 aa)) is interaction with DNAJB6. K240 participates in a covalent cross-link: Glycyl lysine isopeptide (Lys-Gly) (interchain with G-Cter in SUMO2). Residues 242–380 (MADIRAQYEQ…ATYRRLLEDG (139 aa)) form a coil 2 region. The residue at position 295 (T295) is a Phosphothreonine. Glycyl lysine isopeptide (Lys-Gly) (interchain with G-Cter in SUMO2) cross-links involve residues K363 and K365. The tract at residues 381 to 423 (DDFSLNDALDSSNSMQTVQRTTTRKVVDGKVVSETNDTRVLRH) is tail. Residues S384, S391, S392, and S394 each carry the phosphoserine modification. Position 397 is a phosphothreonine (T397). A Glycyl lysine isopeptide (Lys-Gly) (interchain with G-Cter in SUMO2) cross-link involves residue K410.

The protein belongs to the intermediate filament family. As to quaternary structure, heterotetramer of two type I and two type II keratins. KRT18 associates with KRT8. Interacts with PNN and mutated CFTR. Interacts with YWHAE, YWHAH and YWHAZ only when phosphorylated. Interacts with DNAJB6, TCHP and TRADD. Interacts with the thrombin-antithrombin complex. Interacts with FAM83H. Interacts with EPPK1. Interacts with PKP1 and PKP2. Phosphorylation increases by IL-6. In terms of processing, proteolytically cleaved by caspases during epithelial cell apoptosis. Cleavage occurs at Asp-231 by either caspase-3, caspase-6 or caspase-7. Post-translationally, dephosphorylated by ethanol. O-GlcNAcylation increases solubility, and decreases stability by inducing proteasomal degradation. As to expression, expressed on the plasma membrane of hepatocytes and in the narrow apical portions of supporting cells in the vomeronasal sensory epithelium. Detected in the type III alveolar cells of the lung, in the proliferative crypt epithelium of the small intestine and in the older intragemmal cells of the tongue.

It is found in the nucleus matrix. The protein localises to the cytoplasm. Its subcellular location is the perinuclear region. It localises to the nucleus. The protein resides in the nucleolus. Functionally, when phosphorylated, plays a role in filament reorganization. Involved in the delivery of mutated CFTR to the plasma membrane. Together with KRT8, is involved in interleukin-6 (IL-6)-mediated barrier protection. Involved in the uptake of thrombin-antithrombin complexes by hepatic cells. This Rattus norvegicus (Rat) protein is Keratin, type I cytoskeletal 18.